A 215-amino-acid polypeptide reads, in one-letter code: Fanconi anemia core complex-associated protein 24 (215 aa).

As to quaternary structure, belongs to the multisubunit FA complex composed of FANCA, FANCB, FANCC, FANCE, FANCF, FANCG, FANCL/PHF9, FANCM and FAAP24. Interacts with FANCM.

It is found in the nucleus. Its function is as follows. Plays a role in DNA repair through recruitment of the FA core complex to damaged DNA. Regulates FANCD2 monoubiquitination upon DNA damage. Induces chromosomal instability as well as hypersensitivity to DNA cross-linking agents, when repressed. Targets FANCM/FAAP24 complex to the DNA, preferentially to single strand DNA. This Bos taurus (Bovine) protein is Fanconi anemia core complex-associated protein 24.